The following is a 72-amino-acid chain: Large ribosomal subunit protein bL31 (72 aa).

Cys16, Cys18, Cys37, and Cys40 together coordinate Zn(2+).

Belongs to the bacterial ribosomal protein bL31 family. Type A subfamily. In terms of assembly, part of the 50S ribosomal subunit. It depends on Zn(2+) as a cofactor.

Binds the 23S rRNA. The polypeptide is Large ribosomal subunit protein bL31 (Hahella chejuensis (strain KCTC 2396)).